The chain runs to 78 residues: Signal peptidase complex subunit 1 (78 aa).

The Cytoplasmic segment spans residues 1–18 (MNYLEGTIDFAGQLRCQK). Residues 19 to 38 (YMNYGLCTSAVISYIYGYLV) form a helical membrane-spanning segment. The Lumenal segment spans residues 39–42 (QDSY). Residues 43–63 (CVIKLFLILASLVALVCLPAW) traverse the membrane as a helical segment. Residues 64–78 (SMYNKNPLKFQKKKE) lie on the Cytoplasmic side of the membrane.

Belongs to the SPCS1 family. Component of the signal peptidase complex (SPC) composed of a catalytic subunit sec11 and three accessory subunits spc1, spc2 and spc3. The complex induces a local thinning of the ER membrane which is used to measure the length of the signal peptide (SP) h-region of protein substrates. This ensures the selectivity of the complex towards h-regions shorter than 18-20 amino acids. SPC associates with the translocon complex.

It is found in the endoplasmic reticulum membrane. In terms of biological role, component of the signal peptidase complex (SPC) which catalyzes the cleavage of N-terminal signal sequences from nascent proteins as they are translocated into the lumen of the endoplasmic reticulum. Dispensable for SPC enzymatic activity. This chain is Signal peptidase complex subunit 1, found in Schizosaccharomyces pombe (strain 972 / ATCC 24843) (Fission yeast).